The sequence spans 456 residues: Argininosuccinate lyase (456 aa).

Belongs to the lyase 1 family. Argininosuccinate lyase subfamily.

It localises to the cytoplasm. The catalysed reaction is 2-(N(omega)-L-arginino)succinate = fumarate + L-arginine. Its pathway is amino-acid biosynthesis; L-arginine biosynthesis; L-arginine from L-ornithine and carbamoyl phosphate: step 3/3. This chain is Argininosuccinate lyase, found in Shewanella amazonensis (strain ATCC BAA-1098 / SB2B).